The chain runs to 514 residues: H/ACA ribonucleoprotein complex subunit DKC1 (514 aa).

Ala2 is subject to N-acetylalanine. The interval Ala2 to Ser21 is nucleolar localization. Residue Lys20 forms a Glycyl lysine isopeptide (Lys-Gly) (interchain with G-Cter in SUMO2) linkage. Ser21 bears the Phosphoserine mark. Glycyl lysine isopeptide (Lys-Gly) (interchain with G-Cter in SUMO2) cross-links involve residues Lys39 and Lys43. The active-site Nucleophile is the Asp125. Lys191 participates in a covalent cross-link: Glycyl lysine isopeptide (Lys-Gly) (interchain with G-Cter in SUMO2). The PUA domain occupies His296–Met371. Phosphoserine is present on Ser387. A Glycyl lysine isopeptide (Lys-Gly) (interchain with G-Cter in SUMO2) cross-link involves residue Lys394. Lys413 is covalently cross-linked (Glycyl lysine isopeptide (Lys-Gly) (interchain with G-Cter in SUMO1); alternate). Residue Lys413 forms a Glycyl lysine isopeptide (Lys-Gly) (interchain with G-Cter in SUMO2); alternate linkage. Glycyl lysine isopeptide (Lys-Gly) (interchain with G-Cter in SUMO2) cross-links involve residues Lys424 and Lys433. Positions Lys443 to Glu514 are disordered. A nuclear and nucleolar localization region spans residues Lys446–Glu514. Phosphoserine occurs at positions 451, 453, and 455. At Thr458 the chain carries Phosphothreonine. Residue Lys467 forms a Glycyl lysine isopeptide (Lys-Gly) (interchain with G-Cter in SUMO2) linkage. The span at Lys468 to Lys480 shows a compositional bias: basic residues. 3 positions are modified to phosphoserine: Ser485, Ser494, and Ser513.

The protein belongs to the pseudouridine synthase TruB family. Part of the H/ACA small nucleolar ribonucleoprotein (H/ACA snoRNP) complex, which contains NHP2/NOLA2, GAR1/NOLA1, NOP10/NOLA3, and DKC1/NOLA4, which is presumed to be the catalytic subunit. The complex contains a stable core formed by binding of one or two NOP10-DKC1 heterodimers to NHP2; GAR1 subsequently binds to this core via DKC1. The complex binds a box H/ACA small nucleolar RNA (snoRNA), which may target the specific site of modification within the RNA substrate. During assembly, the complex contains NAF1 instead of GAR1/NOLA1. The complex also interacts with TERC, which contains a 3'-terminal domain related to the box H/ACA snoRNAs. Specific interactions with snoRNAs or TERC are mediated by GAR1 and NHP2. Associates with NOLC1/NOPP140. H/ACA snoRNPs interact with the SMN complex, consisting of SMN1 or SMN2, GEMIN2/SIP1, DDX20/GEMIN3, and GEMIN4. This is mediated by interaction between GAR1 and SMN1 or SMN2. The SMN complex may be required for correct assembly of the H/ACA snoRNP complex. Component of the telomerase holoenzyme complex composed of one molecule of TERT, one molecule of WRAP53/TCAB1, two molecules of H/ACA ribonucleoprotein complex subunits DKC1, NOP10, NHP2 and GAR1, and a telomerase RNA template component (TERC). The telomerase holoenzyme complex is associated with TEP1, SMG6/EST1A and POT1. Interacts with SHQ1; this interaction may lead to the stabilization of DKC1, from the time of its synthesis until its association with NOP10, NHP2, and NAF1 at the nascent H/ACA RNA. Interacts with HMBOX1. Interacts with DHX36. As to expression, ubiquitously expressed.

Its subcellular location is the nucleus. It localises to the nucleolus. It is found in the cajal body. The protein resides in the cytoplasm. It carries out the reaction uridine in 5S rRNA = pseudouridine in 5S rRNA. Catalytic subunit of H/ACA small nucleolar ribonucleoprotein (H/ACA snoRNP) complex, which catalyzes pseudouridylation of rRNA. This involves the isomerization of uridine such that the ribose is subsequently attached to C5, instead of the normal N1. Each rRNA can contain up to 100 pseudouridine ('psi') residues, which may serve to stabilize the conformation of rRNAs. Required for ribosome biogenesis and telomere maintenance. Also required for correct processing or intranuclear trafficking of TERC, the RNA component of the telomerase reverse transcriptase (TERT) holoenzyme. Functionally, promotes cell to cell and cell to substratum adhesion, increases the cell proliferation rate and leads to cytokeratin hyper-expression. In Homo sapiens (Human), this protein is H/ACA ribonucleoprotein complex subunit DKC1.